The following is a 378-amino-acid chain: Squalene methyltransferase 2 (378 aa).

A helical transmembrane segment spans residues 17 to 37; sequence LLTVKGATGLIAALILGYIII.

Belongs to the class I-like SAM-binding methyltransferase superfamily. Erg6/SMT family.

Its subcellular location is the microsome membrane. The catalysed reaction is squalene + 2 S-adenosyl-L-methionine = 3,22-dimethyl-1,2,23,24-tetradehydro-2,3,22,23-tetrahydrosqualene + 2 S-adenosyl-L-homocysteine + 2 H(+). Functionally, converts squalene to mono- and dimethyl derivatives, but not to tri- and tetramethylated products. Unable to methylate cycloartenol, zymosterol or lanosterol. Methylates both C-3 and C22 positions, but only C-3 position in monomethylated products. Produces mainly monomethylated squalene and only 20% of dimethylated squalene. The chain is Squalene methyltransferase 2 (TMT-2) from Botryococcus braunii (Green alga).